We begin with the raw amino-acid sequence, 175 residues long: Peptide deformylase (175 aa).

The Fe cation site is built by Cys-96 and His-138. The active site involves Glu-139. Fe cation is bound at residue His-142.

This sequence belongs to the polypeptide deformylase family. The cofactor is Fe(2+).

The enzyme catalyses N-terminal N-formyl-L-methionyl-[peptide] + H2O = N-terminal L-methionyl-[peptide] + formate. Removes the formyl group from the N-terminal Met of newly synthesized proteins. Requires at least a dipeptide for an efficient rate of reaction. N-terminal L-methionine is a prerequisite for activity but the enzyme has broad specificity at other positions. This is Peptide deformylase from Rhodopseudomonas palustris (strain BisB5).